The primary structure comprises 276 residues: uncharacterized protein (276 aa).

Y47 functions as the Proton donor in the catalytic mechanism. Position 110 (H110) interacts with substrate.

The protein belongs to the aldo/keto reductase family.

The protein localises to the cytoplasm. Its subcellular location is the nucleus. This is an uncharacterized protein from Schizosaccharomyces pombe (strain 972 / ATCC 24843) (Fission yeast).